Reading from the N-terminus, the 339-residue chain is Serpentine receptor class alpha-21 (339 aa).

The next 5 helical transmembrane spans lie at 30 to 50 (FNFL…WLAI), 150 to 170 (FIAV…FYIA), 199 to 219 (VRTV…YLSV), 250 to 270 (ILIV…NLLL), and 282 to 302 (VLVA…PLVI).

This sequence belongs to the nematode receptor-like protein sra family.

Its subcellular location is the membrane. The polypeptide is Serpentine receptor class alpha-21 (sra-21) (Caenorhabditis elegans).